The sequence spans 177 residues: Ferritin, heavy subunit (177 aa).

Positions 7–156 constitute a Ferritin-like diiron domain; the sequence is QNFHQDCEAA…DWVTNLRRMG (150 aa). 5 residues coordinate Fe cation: Glu-24, Glu-59, His-62, Glu-104, and Gln-138.

Belongs to the ferritin family. As to quaternary structure, oligomer of 24 subunits. There are at least two types of subunits. The functional molecule forms a roughly spherical shell with a diameter of 12 nm and contains a central cavity into which the insoluble mineral iron core is deposited. As to expression, liver, gonads, head kidney, heart and spleen.

It carries out the reaction 4 Fe(2+) + O2 + 4 H(+) = 4 Fe(3+) + 2 H2O. Functionally, stores iron in a soluble, non-toxic, readily available form. Important for iron homeostasis. Has ferroxidase activity. Iron is taken up in the ferrous form and deposited as ferric hydroxides after oxidation. This is Ferritin, heavy subunit from Salmo salar (Atlantic salmon).